A 170-amino-acid polypeptide reads, in one-letter code: tRNA-splicing endonuclease (170 aa).

Residues Tyr110, His116, and Lys147 contribute to the active site.

It belongs to the tRNA-intron endonuclease family. Archaeal short subfamily. As to quaternary structure, homotetramer; although the tetramer contains four active sites, only two participate in the cleavage. Therefore, it should be considered as a dimer of dimers.

It carries out the reaction pretRNA = a 3'-half-tRNA molecule with a 5'-OH end + a 5'-half-tRNA molecule with a 2',3'-cyclic phosphate end + an intron with a 2',3'-cyclic phosphate and a 5'-hydroxyl terminus.. Its function is as follows. Endonuclease that removes tRNA introns. Cleaves pre-tRNA at the 5'- and 3'-splice sites to release the intron. The products are an intron and two tRNA half-molecules bearing 2',3' cyclic phosphate and 5'-OH termini. Recognizes a pseudosymmetric substrate in which 2 bulged loops of 3 bases are separated by a stem of 4 bp. The chain is tRNA-splicing endonuclease from Pyrococcus furiosus (strain ATCC 43587 / DSM 3638 / JCM 8422 / Vc1).